The following is a 291-amino-acid chain: Pyridoxal 5'-phosphate synthase subunit PdxS (291 aa).

Asp23 serves as a coordination point for D-ribose 5-phosphate. The Schiff-base intermediate with D-ribose 5-phosphate role is filled by Lys80. Gly152 contributes to the D-ribose 5-phosphate binding site. Arg164 provides a ligand contact to D-glyceraldehyde 3-phosphate. D-ribose 5-phosphate contacts are provided by residues Gly213 and 234–235 (GS).

The protein belongs to the PdxS/SNZ family. In terms of assembly, in the presence of PdxT, forms a dodecamer of heterodimers.

The enzyme catalyses aldehydo-D-ribose 5-phosphate + D-glyceraldehyde 3-phosphate + L-glutamine = pyridoxal 5'-phosphate + L-glutamate + phosphate + 3 H2O + H(+). It functions in the pathway cofactor biosynthesis; pyridoxal 5'-phosphate biosynthesis. Functionally, catalyzes the formation of pyridoxal 5'-phosphate from ribose 5-phosphate (RBP), glyceraldehyde 3-phosphate (G3P) and ammonia. The ammonia is provided by the PdxT subunit. Can also use ribulose 5-phosphate and dihydroxyacetone phosphate as substrates, resulting from enzyme-catalyzed isomerization of RBP and G3P, respectively. The protein is Pyridoxal 5'-phosphate synthase subunit PdxS of Streptococcus pneumoniae (strain P1031).